A 166-amino-acid polypeptide reads, in one-letter code: Putative 4-hydroxy-4-methyl-2-oxoglutarate aldolase (166 aa).

Substrate is bound by residues 74 to 77 (GDQI) and Arg96. Asp97 serves as a coordination point for a divalent metal cation.

Belongs to the class II aldolase/RraA-like family. In terms of assembly, homotrimer. It depends on a divalent metal cation as a cofactor.

The enzyme catalyses 4-hydroxy-4-methyl-2-oxoglutarate = 2 pyruvate. It carries out the reaction oxaloacetate + H(+) = pyruvate + CO2. Functionally, catalyzes the aldol cleavage of 4-hydroxy-4-methyl-2-oxoglutarate (HMG) into 2 molecules of pyruvate. Also contains a secondary oxaloacetate (OAA) decarboxylase activity due to the common pyruvate enolate transition state formed following C-C bond cleavage in the retro-aldol and decarboxylation reactions. This is Putative 4-hydroxy-4-methyl-2-oxoglutarate aldolase from Xanthomonas campestris pv. campestris (strain 8004).